The sequence spans 643 residues: Macrolide export ATP-binding/permease protein MacB (643 aa).

The ABC transporter domain maps to 4–242 (IEIKELNRYF…VNNQSKAKSR (239 aa)). 40–47 (GQSGSGKS) contributes to the ATP binding site. 4 consecutive transmembrane segments (helical) span residues 269-289 (LLTM…VALG), 523-543 (IAFI…LVSV), 572-592 (ILIC…IGGI), and 603-623 (VFST…GVIF).

Belongs to the ABC transporter superfamily. Macrolide exporter (TC 3.A.1.122) family. Homodimer. Part of the tripartite efflux system MacAB-TolC, which is composed of an inner membrane transporter, MacB, a periplasmic membrane fusion protein, MacA, and an outer membrane component, TolC. The complex forms a large protein conduit and can translocate molecules across both the inner and outer membranes. Interacts with MacA.

It is found in the cell inner membrane. Part of the tripartite efflux system MacAB-TolC. MacB is a non-canonical ABC transporter that contains transmembrane domains (TMD), which form a pore in the inner membrane, and an ATP-binding domain (NBD), which is responsible for energy generation. Confers resistance against macrolides. The protein is Macrolide export ATP-binding/permease protein MacB of Mannheimia succiniciproducens (strain KCTC 0769BP / MBEL55E).